The sequence spans 651 residues: Acetyl-coenzyme A synthetase (651 aa).

CoA contacts are provided by residues 189–192 (RGGK), Thr311, and Asn335. ATP is bound by residues 387-389 (GEP), 411-416 (DTWWQT), Asp500, and Arg515. Ser523 serves as a coordination point for CoA. ATP is bound at residue Arg526. Residues Val537, His539, and Val542 each contribute to the Mg(2+) site. A CoA-binding site is contributed by Arg584. Residue Lys609 is modified to N6-acetyllysine.

It belongs to the ATP-dependent AMP-binding enzyme family. Requires Mg(2+) as cofactor. In terms of processing, acetylated. Deacetylation by the SIR2-homolog deacetylase activates the enzyme.

It catalyses the reaction acetate + ATP + CoA = acetyl-CoA + AMP + diphosphate. In terms of biological role, catalyzes the conversion of acetate into acetyl-CoA (AcCoA), an essential intermediate at the junction of anabolic and catabolic pathways. AcsA undergoes a two-step reaction. In the first half reaction, AcsA combines acetate with ATP to form acetyl-adenylate (AcAMP) intermediate. In the second half reaction, it can then transfer the acetyl group from AcAMP to the sulfhydryl group of CoA, forming the product AcCoA. This chain is Acetyl-coenzyme A synthetase, found in Rhizobium etli (strain ATCC 51251 / DSM 11541 / JCM 21823 / NBRC 15573 / CFN 42).